A 367-amino-acid chain; its full sequence is Protein pxr1 (367 aa).

Disordered stretches follow at residues 1 to 28 (MGLS…TDSF) and 156 to 336 (KALK…PMGI). A compositionally biased stretch (polar residues) spans 15–27 (DPNNTKWSGNTDS). The G-patch domain occupies 25–79 (TDSFGHRMMKSQGWTPGEYLGAKDAAHAEFHTAANASHIRVVIKDNNLGLGAKIG). A compositionally biased stretch (acidic residues) spans 167-182 (SSDDSDSSSDEEEEEK). 3 stretches are compositionally biased toward basic residues: residues 209 to 221 (SKKS…SKKR), 236 to 248 (KSKK…KSKS), and 265 to 277 (KARK…KKRR). Residues 282-296 (ATAGADTEETSSTSK) are compositionally biased toward low complexity. Residues 297–309 (SSKKNSKKDKHKS) are compositionally biased toward basic residues. Residues 310 to 328 (SSASESSTKESTPTVTESS) show a composition bias toward low complexity.

Belongs to the PINX1 family.

It is found in the nucleus. Its subcellular location is the nucleolus. Involved in rRNA-processing at A0, A1 and A2 sites and negatively regulates telomerase. The chain is Protein pxr1 (pxr1) from Sclerotinia sclerotiorum (strain ATCC 18683 / 1980 / Ss-1) (White mold).